The primary structure comprises 87 residues: Small ribosomal subunit protein uS17 (87 aa).

It belongs to the universal ribosomal protein uS17 family. As to quaternary structure, part of the 30S ribosomal subunit.

Functionally, one of the primary rRNA binding proteins, it binds specifically to the 5'-end of 16S ribosomal RNA. The protein is Small ribosomal subunit protein uS17 of Geobacillus thermodenitrificans (strain NG80-2).